The chain runs to 506 residues: Anaerobic nitric oxide reductase transcription regulator NorR (506 aa).

A 4-aspartylphosphate modification is found at Asp-57. The Sigma-54 factor interaction domain maps to 187-416 (MIGLSPAMTQ…LEHAIHRAVV (230 aa)). ATP is bound by residues 215 to 222 (GETGTGKE) and 278 to 287 (ADNGTLFLDE). The H-T-H motif DNA-binding region spans 481 to 500 (WAASARALETDVANLHRLAK).

Its pathway is nitrogen metabolism; nitric oxide reduction. Its function is as follows. Required for the expression of anaerobic nitric oxide (NO) reductase, acts as a transcriptional activator for at least the norVW operon. Activation also requires sigma-54. This chain is Anaerobic nitric oxide reductase transcription regulator NorR, found in Salmonella schwarzengrund (strain CVM19633).